The chain runs to 497 residues: COP9 signalosome complex subunit 6 (497 aa).

The MPN domain occupies 21-162 (VALHPLPILE…LTIYESNLEI (142 aa)). Disordered regions lie at residues 230 to 282 (ATED…KNRD), 324 to 350 (YLSS…LDQP), and 435 to 497 (AKNS…RFDH). Positions 236-246 (SDKPLMKKVVD) are enriched in basic and acidic residues. Composition is skewed to low complexity over residues 258–272 (SDDA…SSAA) and 333–343 (QQQQQQQQQQQ). The segment covering 440 to 453 (RREQASHGGGERFN) has biased composition (basic and acidic residues). Residues 475 to 488 (VGEGSASGSGGSGP) show a composition bias toward gly residues.

The protein belongs to the peptidase M67A family. CSN6 subfamily. Component of the COP9 signalosome (CSN) complex.

Its subcellular location is the cytoplasm. It is found in the nucleus. In terms of biological role, component of the COP9 signalosome (CSN) complex that acts as an regulator of the ubiquitin (Ubl) conjugation pathway by mediating the deneddylation of the cullin subunit of SCF-type E3 ubiquitin-protein ligase complexes. The CSN complex is involved in the regulation of the circadian clock through its control of the stability of the SCF(FWD1) complex. In Neurospora crassa (strain ATCC 24698 / 74-OR23-1A / CBS 708.71 / DSM 1257 / FGSC 987), this protein is COP9 signalosome complex subunit 6 (csn-6).